The following is a 183-amino-acid chain: Translation initiation factor IF-3 (183 aa).

It belongs to the IF-3 family. In terms of assembly, monomer.

Its subcellular location is the cytoplasm. Its function is as follows. IF-3 binds to the 30S ribosomal subunit and shifts the equilibrium between 70S ribosomes and their 50S and 30S subunits in favor of the free subunits, thus enhancing the availability of 30S subunits on which protein synthesis initiation begins. The protein is Translation initiation factor IF-3 of Azobacteroides pseudotrichonymphae genomovar. CFP2.